The chain runs to 363 residues: Flagellar P-ring protein (363 aa).

Residues 1–21 (MKTVINIFILFTFLASLSANA) form the signal peptide.

This sequence belongs to the FlgI family. In terms of assembly, the basal body constitutes a major portion of the flagellar organelle and consists of four rings (L,P,S, and M) mounted on a central rod.

Its subcellular location is the periplasm. It localises to the bacterial flagellum basal body. Its function is as follows. Assembles around the rod to form the L-ring and probably protects the motor/basal body from shearing forces during rotation. The polypeptide is Flagellar P-ring protein (Colwellia psychrerythraea (strain 34H / ATCC BAA-681) (Vibrio psychroerythus)).